The sequence spans 250 residues: 26 kDa periplasmic immunogenic protein (250 aa).

Positions 1 to 28 are cleaved as a signal peptide; sequence MNTRASNFLAASFSTIMLVGAFSLPAFA.

It is found in the periplasm. In Brucella melitensis biotype 1 (strain ATCC 23456 / CCUG 17765 / NCTC 10094 / 16M), this protein is 26 kDa periplasmic immunogenic protein (bp26).